The chain runs to 354 residues: Dual-specificity RNA methyltransferase RlmN (354 aa).

E89 serves as the catalytic Proton acceptor. Positions 106-339 (KEAKYTVCVS…CTIRKSKGMD (234 aa)) constitute a Radical SAM core domain. A disulfide bridge links C113 with C344. The [4Fe-4S] cluster site is built by C120, C124, and C127. Residues 170 to 171 (GE), S202, 225 to 227 (SLH), and N301 contribute to the S-adenosyl-L-methionine site. C344 (S-methylcysteine intermediate) is an active-site residue.

It belongs to the radical SAM superfamily. RlmN family. [4Fe-4S] cluster serves as cofactor.

It is found in the cytoplasm. The catalysed reaction is adenosine(2503) in 23S rRNA + 2 reduced [2Fe-2S]-[ferredoxin] + 2 S-adenosyl-L-methionine = 2-methyladenosine(2503) in 23S rRNA + 5'-deoxyadenosine + L-methionine + 2 oxidized [2Fe-2S]-[ferredoxin] + S-adenosyl-L-homocysteine. It carries out the reaction adenosine(37) in tRNA + 2 reduced [2Fe-2S]-[ferredoxin] + 2 S-adenosyl-L-methionine = 2-methyladenosine(37) in tRNA + 5'-deoxyadenosine + L-methionine + 2 oxidized [2Fe-2S]-[ferredoxin] + S-adenosyl-L-homocysteine. Its function is as follows. Specifically methylates position 2 of adenine 2503 in 23S rRNA and position 2 of adenine 37 in tRNAs. m2A2503 modification seems to play a crucial role in the proofreading step occurring at the peptidyl transferase center and thus would serve to optimize ribosomal fidelity. This chain is Dual-specificity RNA methyltransferase RlmN, found in Nautilia profundicola (strain ATCC BAA-1463 / DSM 18972 / AmH).